The primary structure comprises 376 residues: MNPLRVIVKEEELDFAAAAAAAAAGEGSPSSWAVGVMDLPRPMEGLGEAGPPPFLCKTYEVVDDPGTDTVISWGFAGNSFVVWDANAFAAVLLPRYFKHSNFSSFVRQLNTYGFRKVDPDRWEFANEGFLRGKKELLKTIKRRRPPPSSPPSSSSSSSSSQHQQQPAAACLEVGQFGRDGVVNRLQRDKSVLIAEVVKLRQEQQTTRAQMQAMEERISAAEQKQQQMTVFLARAMKNPGFLQMLVDRQAGQHGARNRVLEDALSKKRRRPIEYLLTRNGETCAAGESAAMLAADGVAEPDGDTTPRGDGGGGGGGDTESFWMQLLSLGLEEKQREDGVAGGVQESNSGGADVDNDEEDDDDDVDVLVQSIYHLSPK.

The disordered stretch occupies residues 137 to 168 (LKTIKRRRPPPSSPPSSSSSSSSSQHQQQPAA). Low complexity predominate over residues 151 to 160 (PSSSSSSSSS). The stretch at 182–229 (VNRLQRDKSVLIAEVVKLRQEQQTTRAQMQAMEERISAAEQKQQQMTV) forms a coiled coil. The interval 185 to 235 (LQRDKSVLIAEVVKLRQEQQTTRAQMQAMEERISAAEQKQQQMTVFLARAM) is hydrophobic repeat HR-A/B. The Nuclear localization signal signature appears at 265-269 (KKRRR). 2 disordered regions span residues 296-319 (VAEP…DTES) and 332-362 (KQRE…DDDD). A compositionally biased stretch (gly residues) spans 307–316 (GDGGGGGGGD). The AHA motif lies at 318-325 (ESFWMQLL). The segment covering 352-362 (VDNDEEDDDDD) has biased composition (acidic residues). The Nuclear export signal motif lies at 366 to 373 (LVQSIYHL).

It belongs to the HSF family. Class A subfamily. Homotrimer. Exhibits temperature-dependent phosphorylation.

The protein localises to the cytoplasm. The protein resides in the nucleus. Its function is as follows. Transcriptional regulator that specifically binds DNA of heat shock promoter elements (HSE). In Oryza sativa subsp. japonica (Rice), this protein is Heat stress transcription factor A-2a (HSFA2A).